We begin with the raw amino-acid sequence, 127 residues long: UPF0325 protein VS_2356 (127 aa).

It belongs to the UPF0325 family.

This Vibrio atlanticus (strain LGP32) (Vibrio splendidus (strain Mel32)) protein is UPF0325 protein VS_2356.